A 69-amino-acid chain; its full sequence is Sperm protamine P1 (69 aa).

The tract at residues 1 to 69 is disordered; the sequence is MARYRHSRSR…YSRRRRRRYY (69 aa).

It belongs to the protamine P1 family. In terms of tissue distribution, testis.

It is found in the nucleus. Its subcellular location is the chromosome. In terms of biological role, protamines substitute for histones in the chromatin of sperm during the haploid phase of spermatogenesis. They compact sperm DNA into a highly condensed, stable and inactive complex. This is Sperm protamine P1 (PRM1) from Pseudochirops cupreus (Coppery ringtail).